Here is a 1123-residue protein sequence, read N- to C-terminus: Translation initiation factor IF-2 (1123 aa).

Disordered regions lie at residues Leu-52–Ile-452 and Leu-480–Gln-512. 3 stretches are compositionally biased toward low complexity: residues Lys-54–Ala-73, Lys-94–Pro-113, and Ala-121–Ala-133. Positions Pro-170–Ala-187 are enriched in pro residues. Low complexity predominate over residues Ala-193–Pro-206. Pro residues-rich tracts occupy residues Ala-207–Lys-217 and Ser-258–Ser-268. The span at Arg-285–Gly-304 shows a compositional bias: low complexity. Residues Gly-320–Asn-339 show a composition bias toward gly residues. The segment covering Ala-388–Ala-403 has biased composition (pro residues). Over residues Phe-412–Arg-422 the composition is skewed to gly residues. Residues Gly-425 to Arg-439 show a composition bias toward basic and acidic residues. The segment covering Pro-486–Ala-499 has biased composition (low complexity). Positions Met-500–Gln-512 are enriched in basic residues. One can recognise a tr-type G domain in the interval Arg-615 to Leu-787. Residues Gly-624–Thr-631 are G1. A GTP-binding site is contributed by Gly-624–Thr-631. Residues Gly-649–His-653 form a G2 region. Positions Asp-674–Gly-677 are G3. GTP contacts are provided by residues Asp-674–His-678 and Asn-728–Asp-731. Residues Asn-728–Asp-731 are G4. Residues Ser-764–Ile-766 form a G5 region.

This sequence belongs to the TRAFAC class translation factor GTPase superfamily. Classic translation factor GTPase family. IF-2 subfamily.

It is found in the cytoplasm. Functionally, one of the essential components for the initiation of protein synthesis. Protects formylmethionyl-tRNA from spontaneous hydrolysis and promotes its binding to the 30S ribosomal subunits. Also involved in the hydrolysis of GTP during the formation of the 70S ribosomal complex. In Synechococcus sp. (strain WH7803), this protein is Translation initiation factor IF-2.